A 216-amino-acid polypeptide reads, in one-letter code: uncharacterized protein (216 aa).

Residues 1–216 (MVVKIVEAYE…DVTFLKLKLK (216 aa)) form the N-acetyltransferase domain.

The protein belongs to the acetyltransferase family.

This is an uncharacterized protein from Dictyostelium discoideum (Social amoeba).